The primary structure comprises 205 residues: MKKIIICFIFVFSINVSFADATSELIDKIKNIHSMTANFNQKLIDGQTNNNLNSKGNMSLKKPQYFKWITTSPNNQEIVSNGTKLWIYDGDLDQLIIKKVSNDIAQFPYLILLSKNTNNINKLFTVTAQDNNSYILKPKNDQMIDSIKIKFTPNNQLEYLEISTSLNQFTKIEFNNVKTDVDISNTSFDFKAPQNTDIIDETKFA.

The first 19 residues, 1 to 19, serve as a signal peptide directing secretion; the sequence is MKKIIICFIFVFSINVSFA.

The protein belongs to the LolA family. As to quaternary structure, monomer.

Its subcellular location is the periplasm. Functionally, participates in the translocation of lipoproteins from the inner membrane to the outer membrane. Only forms a complex with a lipoprotein if the residue after the N-terminal Cys is not an aspartate (The Asp acts as a targeting signal to indicate that the lipoprotein should stay in the inner membrane). The polypeptide is Outer-membrane lipoprotein carrier protein (Francisella tularensis subsp. tularensis (strain FSC 198)).